Consider the following 452-residue polypeptide: UDP-N-acetylmuramoylalanine--D-glutamate ligase (452 aa).

ATP is bound at residue 119–125; it reads GSNGKTT.

This sequence belongs to the MurCDEF family.

It localises to the cytoplasm. It carries out the reaction UDP-N-acetyl-alpha-D-muramoyl-L-alanine + D-glutamate + ATP = UDP-N-acetyl-alpha-D-muramoyl-L-alanyl-D-glutamate + ADP + phosphate + H(+). It participates in cell wall biogenesis; peptidoglycan biosynthesis. Cell wall formation. Catalyzes the addition of glutamate to the nucleotide precursor UDP-N-acetylmuramoyl-L-alanine (UMA). The protein is UDP-N-acetylmuramoylalanine--D-glutamate ligase of Streptococcus pyogenes serotype M6 (strain ATCC BAA-946 / MGAS10394).